A 61-amino-acid chain; its full sequence is Putative protein RenD (61 aa).

This chain is Putative protein RenD (renD), found in Escherichia coli (strain K12).